The primary structure comprises 329 residues: Protein phosphatase 1 regulatory subunit 42 (329 aa).

LRR repeat units follow at residues 30 to 51 (KLTHLNFSDKNIEEIDDLSVCR), 52 to 73 (NLTVLYLYDNQISQICNLGFAS), 74 to 95 (NLTHLYMQNNNISCIENLSSLH), 96 to 117 (KLSKLFLGGNSITVVEGLEELK), 118 to 139 (SLKELHVEGQKLPCGEKLAFDP), 148 to 169 (TLCILNISKNNIDELWDLAPLR), and 170 to 191 (KMTHLFAADNQLHDIQELETVF). The LRRCT domain occupies 205–243 (NPVCHKPKYRDRLITVCKFLDDLDGKQINELSRQFLINW). Residues 268 to 329 (STSADFHLGP…SSTEWQSLKI (62 aa)) are disordered. Over residues 318 to 329 (GDSSTEWQSLKI) the composition is skewed to polar residues.

Its subcellular location is the cytoplasm. It is found in the cytoskeleton. The protein resides in the microtubule organizing center. It localises to the centrosome. Functionally, may regulate phosphatase activity of protein phosphatase 1 (PP1) complexes. This Danio rerio (Zebrafish) protein is Protein phosphatase 1 regulatory subunit 42 (ppp1r42).